Here is a 600-residue protein sequence, read N- to C-terminus: ATP-dependent RNA helicase DDX55 (600 aa).

The Q motif motif lies at Trp-9 to Ser-37. One can recognise a Helicase ATP-binding domain in the interval Ile-40–Val-223. Ala-53–Thr-60 is an ATP binding site. The short motif at Asp-171–Asp-174 is the DEAD box element. In terms of domain architecture, Helicase C-terminal spans Lys-254–Asp-402. Residues Glu-500–Arg-513 are compositionally biased toward basic and acidic residues. Residues Glu-500–Asp-550 are disordered. Positions Lys-514–Lys-537 are enriched in basic residues. An important for nuclear localization region spans residues Lys-533–Lys-562. A phosphoserine mark is found at Ser-544 and Ser-594.

The protein belongs to the DEAD box helicase family. DDX55/SPB4 subfamily. In terms of assembly, interacts with 28S rRNA. Interacts with double-stranded RNA substrates in vitro; the interaction stimulates ATPase activity.

It localises to the nucleus. It is found in the nucleoplasm. The enzyme catalyses ATP + H2O = ADP + phosphate + H(+). Functionally, probable ATP-binding RNA helicase. Has ATPase activity and is involved in the maturation of precursor large subunit rRNAs. The sequence is that of ATP-dependent RNA helicase DDX55 from Homo sapiens (Human).